A 1087-amino-acid chain; its full sequence is Band 4.1-like protein 3 (1087 aa).

Met1 is subject to N-acetylmethionine. Positions 1–43 (MTTESGSDSESKPDQEAEPQEAAGAQGRAGAPVPEPPKEEQQQ) are disordered. Thr2 is modified (N-acetylthreonine; in Band 4.1-like protein 3, N-terminally processed). Residues 20-32 (QEAAGAQGRAGAP) are compositionally biased toward low complexity. Phosphoserine is present on Ser88. Residues 110–391 (MQCKVILLDG…EHHTFFRLLL (282 aa)) enclose the FERM domain. The interval 394–513 (APPKKFLTLG…PGLGTDSCPL (120 aa)) is hydrophilic. 3 positions are modified to phosphoserine: Ser420, Ser443, and Ser460. Over residues 459–469 (ISQTNLITTVT) the composition is skewed to polar residues. Disordered stretches follow at residues 459 to 529 (ISQT…TELR), 541 to 563 (GYEPSRAEHLPGEPALDSDGPGR), 675 to 715 (SASL…EDAE), and 937 to 965 (SETLEQKPHFESSTVKTETISFGSVSPGG). Thr469 and Thr492 each carry phosphothreonine. Positions 514–860 (SPPSTHCAPT…VVQETVLVEE (347 aa)) are spectrin--actin-binding. Residues 516–526 (PSTHCAPTSPT) show a composition bias toward polar residues. Residues 681-691 (DPSDSSEEETD) are compositionally biased toward acidic residues. Over residues 698 to 707 (AADGETTATE) the composition is skewed to low complexity. Thr706 is subject to Phosphothreonine. Ser708, Ser960, and Ser962 each carry phosphoserine. The C-terminal (CTD) stretch occupies residues 861 to 1083 (RRVVHASGDA…VHKETEITPE (223 aa)). A compositionally biased stretch (polar residues) spans 947–960 (ESSTVKTETISFGS). Thr1081 is subject to Phosphothreonine.

Interacts (via FERM domain) with CADM1. Interacts (via FERM domain) with PRMT3; the interaction is direct and inhibits the protein-arginine N-methyltransferase activity of PRMT3. Interacts with PRMT5. Interacts with PRMT6. In terms of tissue distribution, expressed at high levels in brain, with lower levels in kidney, intestine, and testis. Detected in lung.

The protein localises to the cytoplasm. It is found in the cytoskeleton. The protein resides in the cell junction. Its subcellular location is the cell membrane. Its function is as follows. Tumor suppressor that inhibits cell proliferation and promotes apoptosis. Modulates the activity of protein arginine N-methyltransferases, including PRMT3 and PRMT5. This is Band 4.1-like protein 3 from Homo sapiens (Human).